The primary structure comprises 729 residues: Probable ATP-dependent RNA helicase DDX17 (729 aa).

Residues 20 to 115 (EAATVASATG…PPKKFGNPGE (96 aa)) form a disordered region. Serine 64 carries the post-translational modification Phosphoserine. The span at 86–95 (GDRDRDRDRG) shows a compositional bias: basic and acidic residues. The segment covering 96 to 105 (GFGARGGGGL) has biased composition (gly residues). 3 positions are modified to N6-acetyllysine; by EP300: lysine 108, lysine 109, and lysine 121. Lysine 129 participates in a covalent cross-link: Glycyl lysine isopeptide (Lys-Gly) (interchain with G-Cter in SUMO); alternate. Residue lysine 129 forms a Glycyl lysine isopeptide (Lys-Gly) (interchain with G-Cter in SUMO1); alternate linkage. Lysine 129 is covalently cross-linked (Glycyl lysine isopeptide (Lys-Gly) (interchain with G-Cter in SUMO2); alternate). The short motif at 171-199 (FAFHHANFPQYVMDVLMDQHFTEPTPIQC) is the Q motif element. Residues 202–377 (FPLALSGRDM…EDFLRDYTQI (176 aa)) enclose the Helicase ATP-binding domain. Position 215–222 (215–222 (AQTGSGKT)) interacts with ATP. Residues 325–328 (DEAD) carry the DEAD box motif. The region spanning 405 to 552 (KLIQLMEEIM…AINPKLMQLV (148 aa)) is the Helicase C-terminal domain. Threonine 523 is modified (phosphothreonine). Residue lysine 528 forms a Glycyl lysine isopeptide (Lys-Gly) (interchain with G-Cter in SUMO2) linkage. Positions 547 to 729 (KLMQLVDHRG…PPPPPPPSRK (183 aa)) are transactivation domain. 2 disordered regions span residues 551 to 623 (LVDH…GSPN) and 659 to 729 (TYGA…PSRK). Over residues 568-578 (RTTSSANNPNL) the composition is skewed to polar residues. Residues 583 to 610 (ECDRRLRGVKDGGRRDSASYRDRSETDR) are compositionally biased toward basic and acidic residues. The segment covering 659-688 (TYGASSTTSTGRSSQSSSQQFSGIGRSGQQ) has biased composition (low complexity). Arginine 684 is modified (omega-N-methylarginine). A compositionally biased stretch (polar residues) spans 689-698 (PQPLMSQQFA). Positions 717–729 (YPPPPPPPPPSRK) are enriched in pro residues. The segment at 718 to 726 (PPPPPPPPP) is interaction with YAP1.

Belongs to the DEAD box helicase family. DDX5/DBP2 subfamily. As to quaternary structure, interacts with DDX5 in an RNA-independent manner. Interacts with CDK9 transcription elongation complex under basal conditions. Following cell stimulation with poly(I:C), a synthetic double-stranded RNA mimicking viral infection, the interaction with CDK9 is decreased. Interacts with ESR1 in an estrogen-independent manner. Interacts with HNRNPH1; this interaction is important for the regulation of alternative splicing on G-quadruplex structures. At high, but not low, cell density, interacts with DROSHA and DGCR8, the core components of the microprocessor complex involved in the maturation of primary microRNAs (pri-miRNAs) into pre-miRNAs. The interaction with DGCR8 is reduced during mitosis. At low, but not high, cell density, interacts with YAP1 and with its paralog, WWTR1/TAZ. Interactions with DROSHA and YAP1 are mutually exclusive. In vitro, the pre-miRNA processing activity of the DDX17-containing microprocessor complex is weaker than that of the DROSHA/DGCR8 microprocessor complex devoid of DDX17. Interacts with UPF3B. Interacts with NFAT5; this interaction leads to DDX17 recruitment to LNC2 and S100A4 promoters and NFAT5-mediated DDX17-enhanced transactivation. Interacts with HDAC1, HDAC2 and HDAC3; this interaction with HDAC1 and HDAC3, but not HDAC2, depends upon DDX17 acetylation. Interacts with ZC3HAV1 (via N-terminal domain) in an RNA-independent manner. Interacts with EXOSC3/RRP40 and EXOSC5/RRP46; this interaction may be indirect and mediated by ZC3HAV1-binding. Interacts with EP300; this interaction leads to acetylation at lysine residues. Interacts with CREBBP/CBP and KAT2B/P/CAF. Directly interacts with CTNNB1. Interacts with MYOD1. Interacts with TP53. Interacts with DCP1A in an RNA-independent manner. Interacts with DCP2 in an RNA-dependent manner. Interacts with DHX36; this interaction occurs in a RNA-dependent manner. Interacts with ERCC6. Post-translationally, sumoylation significantly increases stability. It also promotes interaction specifically with HDAC1 (but not HDAC2, nor HDAC3) and strongly stimulates ESR1 and TP53 coactivation. Acetylation at lysine residues stabilizes the protein, stimulates interaction with HDAC1 and HDAC3, but not HDAC2, and represses ESR1 and TP53 coactivation activity. Widely expressed. Low expression, if any, in normal colonic epithelial cells (at protein level). Levels tend to increase during colon cancer progression, from very low in benign hyperplastic polyps to very high in tubular and villous adenomas.

The protein localises to the nucleus. Its subcellular location is the nucleolus. The protein resides in the cytoplasm. It is found in the cytosol. The enzyme catalyses ATP + H2O = ADP + phosphate + H(+). Functionally, as an RNA helicase, unwinds RNA and alters RNA structures through ATP binding and hydrolysis. Involved in multiple cellular processes, including pre-mRNA splicing, alternative splicing, ribosomal RNA processing and miRNA processing, as well as transcription regulation. Regulates the alternative splicing of exons exhibiting specific features. For instance, promotes the inclusion of AC-rich alternative exons in CD44 transcripts. This function requires the RNA helicase activity. Affects NFAT5 and histone macro-H2A.1/MACROH2A1 alternative splicing in a CDK9-dependent manner. In NFAT5, promotes the introduction of alternative exon 4, which contains 2 stop codons and may target NFAT5 exon 4-containing transcripts to nonsense-mediated mRNA decay, leading to the down-regulation of NFAT5 protein. Affects splicing of mediators of steroid hormone signaling pathway, including kinases that phosphorylates ESR1, such as CDK2, MAPK1 and GSK3B, and transcriptional regulators, such as CREBBP, MED1, NCOR1 and NCOR2. By affecting GSK3B splicing, participates in ESR1 and AR stabilization. In myoblasts and epithelial cells, cooperates with HNRNPH1 to control the splicing of specific subsets of exons. In addition to binding mature mRNAs, also interacts with certain pri-microRNAs, including MIR663/miR-663a, MIR99B/miR-99b, and MIR6087/miR-6087. Binds pri-microRNAs on the 3' segment flanking the stem loop via the 5'-[ACG]CAUC[ACU]-3' consensus sequence. Required for the production of subsets of microRNAs, including MIR21 and MIR125B1. May be involved not only in microRNA primary transcript processing, but also stabilization. Participates in MYC down-regulation at high cell density through the production of MYC-targeting microRNAs. Along with DDX5, may be involved in the processing of the 32S intermediate into the mature 28S ribosomal RNA. Promoter-specific transcription regulator, functioning as a coactivator or corepressor depending on the context of the promoter and the transcriptional complex in which it exists. Enhances NFAT5 transcriptional activity. Synergizes with TP53 in the activation of the MDM2 promoter; this activity requires acetylation on lysine residues. May also coactivate MDM2 transcription through a TP53-independent pathway. Coactivates MMP7 transcription. Along with CTNNB1, coactivates MYC, JUN, FOSL1 and cyclin D1/CCND1 transcription. Alone or in combination with DDX5 and/or SRA1 non-coding RNA, plays a critical role in promoting the assembly of proteins required for the formation of the transcription initiation complex and chromatin remodeling leading to coactivation of MYOD1-dependent transcription. This helicase-independent activity is required for skeletal muscle cells to properly differentiate into myotubes. During epithelial-to-mesenchymal transition, coregulates SMAD-dependent transcriptional activity, directly controlling key effectors of differentiation, including miRNAs which in turn directly repress its expression. Plays a role in estrogen and testosterone signaling pathway at several levels. Mediates the use of alternative promoters in estrogen-responsive genes and regulates transcription and splicing of a large number of steroid hormone target genes. Contrary to splicing regulation activity, transcriptional coregulation of the estrogen receptor ESR1 is helicase-independent. Plays a role in innate immunity. Specifically restricts bunyavirus infection, including Rift Valley fever virus (RVFV) or La Crosse virus (LACV), but not vesicular stomatitis virus (VSV), in an interferon- and DROSHA-independent manner. Binds to RVFV RNA, likely via structured viral RNA elements. Promotes mRNA degradation mediated by the antiviral zinc-finger protein ZC3HAV1, in an ATPase-dependent manner. In Homo sapiens (Human), this protein is Probable ATP-dependent RNA helicase DDX17 (DDX17).